We begin with the raw amino-acid sequence, 409 residues long: 2,3-bisphosphoglycerate-independent phosphoglycerate mutase (409 aa).

The tract at residues 160–179 is disordered; sequence ITDADPKHEGNKPKTVKPLD.

Belongs to the BPG-independent phosphoglycerate mutase family. A-PGAM subfamily.

The catalysed reaction is (2R)-2-phosphoglycerate = (2R)-3-phosphoglycerate. The protein operates within carbohydrate degradation; glycolysis; pyruvate from D-glyceraldehyde 3-phosphate: step 3/5. In terms of biological role, catalyzes the interconversion of 2-phosphoglycerate and 3-phosphoglycerate. In Methanosphaera stadtmanae (strain ATCC 43021 / DSM 3091 / JCM 11832 / MCB-3), this protein is 2,3-bisphosphoglycerate-independent phosphoglycerate mutase.